The sequence spans 236 residues: Pyridoxal phosphate homeostasis protein (236 aa).

Lys-36 carries the N6-(pyridoxal phosphate)lysine modification.

This sequence belongs to the pyridoxal phosphate-binding protein YggS/PROSC family.

In terms of biological role, pyridoxal 5'-phosphate (PLP)-binding protein, which is involved in PLP homeostasis. The protein is Pyridoxal phosphate homeostasis protein of Vibrio cholerae serotype O1 (strain ATCC 39315 / El Tor Inaba N16961).